We begin with the raw amino-acid sequence, 193 residues long: Zinc finger CCHC domain-containing protein 17 (193 aa).

Positions 1-40 (MSSCRVDKPSEIVDVGDKVWVKLIGREMKNDRIKVSLSMK) constitute an S1 motif; truncated domain. Ser66 carries the post-translational modification Phosphoserine. The segment at 83–100 (TTCKKCGCKGHFAKDCFM) adopts a CCHC-type zinc-finger fold. Lys96 is subject to N6-acetyllysine. The interval 113-193 (EEEEKEEAKS…KKKHKKKHKE (81 aa)) is disordered. The span at 118–129 (EEAKSAEFEKPV) shows a compositional bias: basic and acidic residues. The span at 134 to 150 (PSRKRKKEKKKKKHRDR) shows a compositional bias: basic residues. Ser135 is modified (phosphoserine). Over residues 163 to 177 (DTGKRARHTSKDSKA) the composition is skewed to basic and acidic residues. Over residues 178-193 (AKKKKKKKKHKKKHKE) the composition is skewed to basic residues.

In terms of assembly, may interact with PNN. May associate with the 60 S ribosomal subunit.

It is found in the nucleus. Its subcellular location is the nucleolus. The polypeptide is Zinc finger CCHC domain-containing protein 17 (ZCCHC17) (Macaca fascicularis (Crab-eating macaque)).